A 1577-amino-acid polypeptide reads, in one-letter code: Probable serine/threonine-protein kinase gdt9 (1577 aa).

Positions 1-16 (MKTFLLIFLLICVCKG) are cleaved as a signal peptide. Residues 17–966 (ITNITTPSIY…NNEDNHKKLV (950 aa)) lie on the Extracellular side of the membrane. The helical transmembrane segment at 967–987 (IALSVSIPVAALLVILCFGIF) threads the bilayer. Residues 988–1577 (ICYNNNKKNK…SLVKIFKRFN (590 aa)) lie on the Cytoplasmic side of the membrane. The span at 998–1014 (NETKGKDIETNTDKKDD) shows a compositional bias: basic and acidic residues. 2 disordered regions span residues 998 to 1019 (NETK…NENE) and 1050 to 1128 (TLPP…FPTI). Residues 1050 to 1082 (TLPPQSTISIDTSPSSENTTFTESLTPKKSATV) are compositionally biased toward polar residues. The span at 1091–1115 (NSTNESTVSNSSSENNSDNNNNNNN) shows a compositional bias: low complexity. The 284-residue stretch at 1290–1573 (LDFDEICGQG…EIVFSLVKIF (284 aa)) folds into the Protein kinase domain. ATP is bound by residues 1296–1304 (CGQGTYGMV) and Lys-1317. The Proton acceptor role is filled by Asp-1436.

The protein in the N-terminal section; belongs to the GDT family. In the C-terminal section; belongs to the protein kinase superfamily. TKL Ser/Thr protein kinase family.

It localises to the membrane. The catalysed reaction is L-seryl-[protein] + ATP = O-phospho-L-seryl-[protein] + ADP + H(+). The enzyme catalyses L-threonyl-[protein] + ATP = O-phospho-L-threonyl-[protein] + ADP + H(+). This is Probable serine/threonine-protein kinase gdt9 (gdt9) from Dictyostelium discoideum (Social amoeba).